A 330-amino-acid chain; its full sequence is Probable L-lactate dehydrogenase (330 aa).

Arg-105, Asn-137, and Arg-168 together coordinate substrate. NAD(+) is bound at residue Asn-137. His-192 (proton acceptor) is an active-site residue.

This sequence belongs to the LDH/MDH superfamily. LDH family. As to quaternary structure, homotetramer.

It localises to the cytoplasm. It catalyses the reaction (S)-lactate + NAD(+) = pyruvate + NADH + H(+). Its pathway is fermentation; pyruvate fermentation to lactate; (S)-lactate from pyruvate: step 1/1. The sequence is that of Probable L-lactate dehydrogenase from Schizosaccharomyces pombe (strain 972 / ATCC 24843) (Fission yeast).